The sequence spans 740 residues: E3 ubiquitin-protein ligase TRIM9 (740 aa).

An RING-type; degenerate zinc finger spans residues 7–30; sequence CPTCKQLYANPVLLPCFHALCLGC. Residues 64–73 are compositionally biased toward gly residues; sequence GNGGGAGGGA. A disordered region spans residues 64 to 114; it reads GNGGGAGGGAAAPVTNPNGPGTRHSSHSSAASTASSNTGSESVTSDQDQSD. Low complexity predominate over residues 74–105; that stretch reads AAPVTNPNGPGTRHSSHSSAASTASSNTGSES. Residues 195-244 form a B box-type 1; atypical zinc finger; it reads REALRCQMCETDPKVASLICEQCEIRYCDACRELTHPARGPLAKHTLVKP. Residues Cys200, Cys203, Cys225, His230, Cys255, His258, Cys277, and His283 each contribute to the Zn(2+) site. The B box-type 2 zinc finger occupies 250–291; that stretch reads QRESVCGEHEETLSQYCLSCKAPACGLCIGELRHQAHDVQSI. A coiled-coil region spans residues 294–324; it reads TCKAQKTELSHNLQQLSEKARSTTEFIQRLK. A COS domain is found at 399-459; the sequence is LKETDSAAFL…ARAIDNLNFI (61 aa). In terms of domain architecture, Fibronectin type-III spans 474–567; the sequence is APMTPTILPS…ELIGLQTAEV (94 aa). Residues 549 to 736 form the B30.2/SPRY domain; it reads NSAGEGEYSE…TMHTAMDAPK (188 aa).

This sequence belongs to the TRIM/RBCC family. As to quaternary structure, interacts (via fibronectin type-III domain) with pico. Interacts (via SPRY domain) with netrin receptor fra.

The protein localises to the cell projection. It localises to the axon. The protein resides in the perikaryon. The enzyme catalyses S-ubiquitinyl-[E2 ubiquitin-conjugating enzyme]-L-cysteine + [acceptor protein]-L-lysine = [E2 ubiquitin-conjugating enzyme]-L-cysteine + N(6)-ubiquitinyl-[acceptor protein]-L-lysine.. The protein operates within protein modification; protein ubiquitination. Functionally, E3 ubiquitin-protein ligase activity. During embryonic and larval development, regulates the pattern of axonal projections of class IV nociceptive sensory neurons (C4da) downstream of netrin receptor fra. Regulates fine-scale topography of C4da axon terminals upon neuronal activity. During eye development, consolidates the attachment of R8 photoreceptor growth cones to the target medulla layer, probably downstream of fra. The chain is E3 ubiquitin-protein ligase TRIM9 from Drosophila melanogaster (Fruit fly).